The primary structure comprises 316 residues: Bifunctional protein FolD (316 aa).

NADP(+) contacts are provided by residues 165–167 and I231; that span reads GKS.

Belongs to the tetrahydrofolate dehydrogenase/cyclohydrolase family. Homodimer.

The catalysed reaction is (6R)-5,10-methylene-5,6,7,8-tetrahydrofolate + NADP(+) = (6R)-5,10-methenyltetrahydrofolate + NADPH. The enzyme catalyses (6R)-5,10-methenyltetrahydrofolate + H2O = (6R)-10-formyltetrahydrofolate + H(+). Its pathway is one-carbon metabolism; tetrahydrofolate interconversion. Its function is as follows. Catalyzes the oxidation of 5,10-methylenetetrahydrofolate to 5,10-methenyltetrahydrofolate and then the hydrolysis of 5,10-methenyltetrahydrofolate to 10-formyltetrahydrofolate. This Sphingobium chlorophenolicum protein is Bifunctional protein FolD.